The primary structure comprises 833 residues: Leucine--tRNA ligase (833 aa).

The short motif at Pro41–His52 is the 'HIGH' region element. A 'KMSKS' region motif is present at residues Lys610–Ser614. Lys613 contributes to the ATP binding site.

The protein belongs to the class-I aminoacyl-tRNA synthetase family.

It localises to the cytoplasm. The enzyme catalyses tRNA(Leu) + L-leucine + ATP = L-leucyl-tRNA(Leu) + AMP + diphosphate. This chain is Leucine--tRNA ligase, found in Streptococcus uberis (strain ATCC BAA-854 / 0140J).